The sequence spans 382 residues: Probable G-protein coupled receptor 132 (382 aa).

Over 1–42 the chain is Extracellular; the sequence is MRSEPTNAAGNTTLGVTSVLQSTSVPSSETCHVSYEESRVVL. A glycan (N-linked (GlcNAc...) asparagine) is linked at Asn-11. Residues 43 to 65 form a helical membrane-spanning segment; it reads VVVYSAVCLLGLPANCLTAWLTL. The Cytoplasmic portion of the chain corresponds to 66-76; the sequence is LQVLQRNVLAV. A helical membrane pass occupies residues 77-99; the sequence is YLFCLSLCELLYISTVPLWIIYI. Residues 100–113 are Extracellular-facing; the sequence is QNQHKWNLGPQACK. Cys-112 and Cys-184 are oxidised to a cystine. Residues 114–135 traverse the membrane as a helical segment; sequence VTAYIFFCNIYISILLLCCISC. At 136 to 155 the chain is on the cytoplasmic side; it reads DRYMAVVYALESRGHRHQRT. The chain crosses the membrane as a helical span at residues 156-175; that stretch reads AVTISACVILLVGLVNYPVF. The Extracellular segment spans residues 176–198; sequence DMKVEKSFCFEPLRMNSKIAGYH. A helical transmembrane segment spans residues 199-221; that stretch reads YLRFTFGFAIPLGILAFTNHQIF. The Cytoplasmic segment spans residues 222 to 241; it reads RSIKLSDSLSAAQKNKVKRS. The helical transmembrane segment at 242-261 threads the bilayer; the sequence is AIAVVTIFLVCFAPYHVVLL. At 262–286 the chain is on the extracellular side; that stretch reads VKAASFSFYQGDMDAVCAFESRLYT. A helical transmembrane segment spans residues 287–309; that stretch reads VSMVFLCLSTVNSVADPIIYVLG. Residues 310 to 382 are Cytoplasmic-facing; it reads TDHSRQEVSR…SPERLPEELC (73 aa).

This sequence belongs to the G-protein coupled receptor 1 family. Highly expressed in hematopoietic tissues rich in lymphocytes like spleen and thymus. Weakly expressed in heart and lung. Highly expressed in infiltrating macrophages within atherosclerotic lesions.

It localises to the cell membrane. In terms of biological role, may be a receptor for oxidized free fatty acids derived from linoleic and arachidonic acids such as 9-hydroxyoctadecadienoic acid (9-HODE). Activates a G alpha protein, most likely G alpha(q). May be involved in apoptosis. Functions at the G2/M checkpoint to delay mitosis. May function as a sensor that monitors the oxidative states and mediates appropriate cellular responses such as secretion of paracrine signals and attenuation of proliferation. May mediate ths accumulation of intracellular inositol phosphates at acidic pH through proton-sensing activity. The polypeptide is Probable G-protein coupled receptor 132 (Gpr132) (Mus musculus (Mouse)).